Consider the following 272-residue polypeptide: Dermonecrotic toxin LvSicTox-alphaIC1bii (272 aa).

Residue His5 is part of the active site. Residues Glu25 and Asp27 each coordinate Mg(2+). His41 (nucleophile) is an active-site residue. Cystine bridges form between Cys45–Cys51 and Cys47–Cys189. Asp84 contacts Mg(2+).

This sequence belongs to the arthropod phospholipase D family. Class II subfamily. Mg(2+) serves as cofactor. As to expression, expressed by the venom gland.

It localises to the secreted. The catalysed reaction is an N-(acyl)-sphingosylphosphocholine = an N-(acyl)-sphingosyl-1,3-cyclic phosphate + choline. It catalyses the reaction an N-(acyl)-sphingosylphosphoethanolamine = an N-(acyl)-sphingosyl-1,3-cyclic phosphate + ethanolamine. The enzyme catalyses a 1-acyl-sn-glycero-3-phosphocholine = a 1-acyl-sn-glycero-2,3-cyclic phosphate + choline. It carries out the reaction a 1-acyl-sn-glycero-3-phosphoethanolamine = a 1-acyl-sn-glycero-2,3-cyclic phosphate + ethanolamine. Its function is as follows. Dermonecrotic toxins cleave the phosphodiester linkage between the phosphate and headgroup of certain phospholipids (sphingolipid and lysolipid substrates), forming an alcohol (often choline) and a cyclic phosphate. This toxin acts on sphingomyelin (SM). It may also act on ceramide phosphoethanolamine (CPE), lysophosphatidylcholine (LPC) and lysophosphatidylethanolamine (LPE), but not on lysophosphatidylserine (LPS), and lysophosphatidylglycerol (LPG). It acts by transphosphatidylation, releasing exclusively cyclic phosphate products as second products. Induces dermonecrosis, hemolysis, increased vascular permeability, edema, inflammatory response, and platelet aggregation. This Loxosceles variegata (Recluse spider) protein is Dermonecrotic toxin LvSicTox-alphaIC1bii.